The chain runs to 80 residues: Exodeoxyribonuclease 7 small subunit (80 aa).

The protein belongs to the XseB family. As to quaternary structure, heterooligomer composed of large and small subunits.

It localises to the cytoplasm. The enzyme catalyses Exonucleolytic cleavage in either 5'- to 3'- or 3'- to 5'-direction to yield nucleoside 5'-phosphates.. Its function is as follows. Bidirectionally degrades single-stranded DNA into large acid-insoluble oligonucleotides, which are then degraded further into small acid-soluble oligonucleotides. This is Exodeoxyribonuclease 7 small subunit from Vibrio parahaemolyticus serotype O3:K6 (strain RIMD 2210633).